We begin with the raw amino-acid sequence, 198 residues long: HTH-type transcriptional regulator BetI (198 aa).

In terms of domain architecture, HTH tetR-type spans 8-68 (PLRRRELIDA…ATMRHLLREL (61 aa)). The H-T-H motif DNA-binding region spans 31-50 (TVAQIAHEAGVSPALAHHYF).

It participates in amine and polyamine biosynthesis; betaine biosynthesis via choline pathway [regulation]. Repressor involved in the biosynthesis of the osmoprotectant glycine betaine. It represses transcription of the choline transporter BetT and the genes of BetAB involved in the synthesis of glycine betaine. This is HTH-type transcriptional regulator BetI from Brucella suis biovar 1 (strain 1330).